A 179-amino-acid polypeptide reads, in one-letter code: Ribosome maturation factor RimM (179 aa).

The PRC barrel domain occupies 102–179; sequence DGEYYWYQLE…EMKVDWDADF (78 aa).

It belongs to the RimM family. In terms of assembly, binds ribosomal protein uS19.

The protein resides in the cytoplasm. Its function is as follows. An accessory protein needed during the final step in the assembly of 30S ribosomal subunit, possibly for assembly of the head region. Essential for efficient processing of 16S rRNA. May be needed both before and after RbfA during the maturation of 16S rRNA. It has affinity for free ribosomal 30S subunits but not for 70S ribosomes. This Pseudomonas syringae pv. syringae (strain B728a) protein is Ribosome maturation factor RimM.